A 225-amino-acid chain; its full sequence is Probable methylthioribulose-1-phosphate dehydratase (225 aa).

Residue cysteine 86 coordinates substrate. Zn(2+) contacts are provided by histidine 104 and histidine 106. Glutamate 127 functions as the Proton donor/acceptor in the catalytic mechanism. Residue histidine 183 participates in Zn(2+) binding.

The protein belongs to the aldolase class II family. MtnB subfamily. Requires Zn(2+) as cofactor.

The protein resides in the cytoplasm. The enzyme catalyses 5-(methylsulfanyl)-D-ribulose 1-phosphate = 5-methylsulfanyl-2,3-dioxopentyl phosphate + H2O. The protein operates within amino-acid biosynthesis; L-methionine biosynthesis via salvage pathway; L-methionine from S-methyl-5-thio-alpha-D-ribose 1-phosphate: step 2/6. Catalyzes the dehydration of methylthioribulose-1-phosphate (MTRu-1-P) into 2,3-diketo-5-methylthiopentyl-1-phosphate (DK-MTP-1-P). The polypeptide is Probable methylthioribulose-1-phosphate dehydratase (Leishmania braziliensis).